The chain runs to 217 residues: Uracil-DNA glycosylase (217 aa).

D62 functions as the Proton acceptor in the catalytic mechanism.

Belongs to the uracil-DNA glycosylase (UDG) superfamily. UNG family.

The protein resides in the cytoplasm. The enzyme catalyses Hydrolyzes single-stranded DNA or mismatched double-stranded DNA and polynucleotides, releasing free uracil.. Excises uracil residues from the DNA which can arise as a result of misincorporation of dUMP residues by DNA polymerase or due to deamination of cytosine. The sequence is that of Uracil-DNA glycosylase from Streptococcus pyogenes serotype M6 (strain ATCC BAA-946 / MGAS10394).